Reading from the N-terminus, the 405-residue chain is Glucose-1-phosphate adenylyltransferase (405 aa).

Residues tyrosine 96, glycine 161, 176–177 (EK), and serine 194 contribute to the alpha-D-glucose 1-phosphate site.

The protein belongs to the bacterial/plant glucose-1-phosphate adenylyltransferase family. As to quaternary structure, homotetramer.

It carries out the reaction alpha-D-glucose 1-phosphate + ATP + H(+) = ADP-alpha-D-glucose + diphosphate. It functions in the pathway glycan biosynthesis; glycogen biosynthesis. Involved in the biosynthesis of ADP-glucose, a building block required for the elongation reactions to produce glycogen. Catalyzes the reaction between ATP and alpha-D-glucose 1-phosphate (G1P) to produce pyrophosphate and ADP-Glc. This chain is Glucose-1-phosphate adenylyltransferase, found in Photobacterium profundum (strain SS9).